A 439-amino-acid chain; its full sequence is Enolase 2 (439 aa).

The substrate site is built by His160 and Glu169. Catalysis depends on Glu212, which acts as the Proton donor. Residues Asp247, Glu296, and Asp323 each coordinate Mg(2+). Positions 296 and 323 each coordinate substrate. The active-site Proton acceptor is the Lys348. Residues 375–378 and Lys399 contribute to the substrate site; that span reads SHRS.

Belongs to the enolase family. In terms of assembly, homodimer. Mg(2+) is required as a cofactor.

It localises to the cytoplasm. The catalysed reaction is (2R)-2-phosphoglycerate = phosphoenolpyruvate + H2O. Its pathway is carbohydrate degradation; glycolysis; pyruvate from D-glyceraldehyde 3-phosphate: step 4/5. In Debaryomyces hansenii (strain ATCC 36239 / CBS 767 / BCRC 21394 / JCM 1990 / NBRC 0083 / IGC 2968) (Yeast), this protein is Enolase 2 (ENO2).